Here is a 207-residue protein sequence, read N- to C-terminus: Small ribosomal subunit protein uS4 (207 aa).

Residues 29–38 are compositionally biased toward basic and acidic residues; it reads SDKAKFDSKP. The tract at residues 29 to 54 is disordered; that stretch reads SDKAKFDSKPGQHGRTSGTRTSDYGL. The segment covering 42 to 52 has biased composition (polar residues); the sequence is GRTSGTRTSDY. Residues 97–160 enclose the S4 RNA-binding domain; sequence SRLDNVVYRM…KKQTRIAEAL (64 aa).

Belongs to the universal ribosomal protein uS4 family. Part of the 30S ribosomal subunit. Contacts protein S5. The interaction surface between S4 and S5 is involved in control of translational fidelity.

In terms of biological role, one of the primary rRNA binding proteins, it binds directly to 16S rRNA where it nucleates assembly of the body of the 30S subunit. Its function is as follows. With S5 and S12 plays an important role in translational accuracy. The polypeptide is Small ribosomal subunit protein uS4 (Polaromonas naphthalenivorans (strain CJ2)).